The following is a 1322-amino-acid chain: Putative DNA ligase 4 (1322 aa).

Positions 265, 267, 272, 287, 317, 387, 497, 502, 513, 519, and 521 each coordinate ATP. The N6-AMP-lysine intermediate role is filled by Lys267. A Mg(2+)-binding site is contributed by Glu317. Glu497 contributes to the Mg(2+) binding site. 2 consecutive BRCT domains span residues 686-768 and 825-935; these read LDVQ…PKFD and ERFC…TYSL. Disordered regions lie at residues 945-1212 and 1245-1310; these read IERS…SATC and AEAK…KKVS. Over residues 957 to 969 the composition is skewed to basic and acidic residues; the sequence is DKLEENEKADTSH. 2 stretches are compositionally biased toward basic residues: residues 970–979 and 994–1005; these read VKHAPRKRGR and PVRRTRARRGNQ. Basic and acidic residues-rich tracts occupy residues 1007 to 1022 and 1033 to 1047; these read AKID…HGET and NISK…KDQV. The span at 1051-1063 shows a compositional bias: basic residues; it reads PVRRTRARRGKQH. Composition is skewed to basic and acidic residues over residues 1082–1104, 1125–1161, and 1190–1204; these read DDQR…RDQG, AKID…KDQE, and PKHE…RDTA. The span at 1261–1288 shows a compositional bias: low complexity; it reads SSYVAPVPQASASSASSSGVPAPHAGSS.

This sequence belongs to the ATP-dependent DNA ligase family. Mg(2+) serves as cofactor.

It is found in the nucleus. It catalyses the reaction ATP + (deoxyribonucleotide)n-3'-hydroxyl + 5'-phospho-(deoxyribonucleotide)m = (deoxyribonucleotide)n+m + AMP + diphosphate.. In terms of biological role, DNA ligase involved in DNA non-homologous end joining (NHEJ); required for double-strand break (DSB) repair. The chain is Putative DNA ligase 4 (LIG4) from Oryza sativa subsp. japonica (Rice).